Consider the following 83-residue polypeptide: MANHKSALKRIRSNEKKRVLNRYQHKTTRNAIKALRIATDKTEATAKLSNVISMIDKLAKKNIIHDNKASNLKSKLTRFVSSL.

Belongs to the bacterial ribosomal protein bS20 family.

Functionally, binds directly to 16S ribosomal RNA. This is Small ribosomal subunit protein bS20 from Flavobacterium psychrophilum (strain ATCC 49511 / DSM 21280 / CIP 103535 / JIP02/86).